The chain runs to 599 residues: THO complex subunit 1 (599 aa).

Disordered stretches follow at residues 376 to 395 (EKQP…RRQR) and 497 to 599 (KYQA…MPVS). A compositionally biased stretch (basic and acidic residues) spans 502 to 522 (PNEKAKRAKKEETKGGSHETE). Positions 575–585 (QIEDGETEEAG) are enriched in acidic residues.

In terms of assembly, component of the THO complex, which is composed of THO1, THO2, THO3, THO5, THO6 and THO7.

The protein resides in the nucleus. Its function is as follows. Acts as a component of the THO subcomplex of the TREX complex which is thought to couple mRNA transcription, processing and nuclear export. Contributes to the integrity of the endogenous trans-acting small interfering RNA (ta-siRNA) pathway. May process or transport a long RNA molecule so that it can be a template for secondary siRNA production. May participate in the trafficking of siRNA precursors to the ARGONAUTE catalytic center. Required for the generation of functional messenger ribonucleoproteins (mRNPs). Plays an important roles in plant innate immunity. The polypeptide is THO complex subunit 1 (THO1) (Arabidopsis thaliana (Mouse-ear cress)).